The primary structure comprises 103 residues: Flagellar hook-basal body complex protein FliE (103 aa).

Belongs to the FliE family.

Its subcellular location is the bacterial flagellum basal body. This Helicobacter hepaticus (strain ATCC 51449 / 3B1) protein is Flagellar hook-basal body complex protein FliE.